Here is a 219-residue protein sequence, read N- to C-terminus: Cytidylate kinase (219 aa).

15–23 (GPAASGKGT) provides a ligand contact to ATP.

Belongs to the cytidylate kinase family. Type 1 subfamily.

The protein resides in the cytoplasm. The enzyme catalyses CMP + ATP = CDP + ADP. It catalyses the reaction dCMP + ATP = dCDP + ADP. The polypeptide is Cytidylate kinase (Brucella melitensis biotype 2 (strain ATCC 23457)).